We begin with the raw amino-acid sequence, 314 residues long: E3 ubiquitin-protein ligase SINA-like 11 (314 aa).

Polar residues predominate over residues 1 to 12; that stretch reads MEDSNSHPQNQT. The disordered stretch occupies residues 1–31; that stretch reads MEDSNSHPQNQTSKRKSSHPQKKQRMENETR. Over residues 13–23 the composition is skewed to basic residues; that stretch reads SKRKSSHPQKK. An RING-type; degenerate zinc finger spans residues 43-81; the sequence is CPVCFEPLTIPTFQCDDGHIVCNFCFAKVSNKCPGPGCD. An SBD region spans residues 95–280; sequence VLESAFVPCQ…PANEVQQVTI (186 aa). Residues 98-156 form an SIAH-type zinc finger; the sequence is SAFVPCQNTEFGCTKSVSYEKVSSHEKECNYSQCSCPNLECNYTGSYNIIYGHFMRRHL. Residues Cys-103, Cys-110, His-122, Cys-126, Cys-133, Cys-138, His-150, and His-155 each contribute to the Zn(2+) site.

This sequence belongs to the SINA (Seven in absentia) family.

It carries out the reaction S-ubiquitinyl-[E2 ubiquitin-conjugating enzyme]-L-cysteine + [acceptor protein]-L-lysine = [E2 ubiquitin-conjugating enzyme]-L-cysteine + N(6)-ubiquitinyl-[acceptor protein]-L-lysine.. Its pathway is protein modification; protein ubiquitination. Functionally, E3 ubiquitin-protein ligase that mediates ubiquitination and subsequent proteasomal degradation of target proteins. E3 ubiquitin ligases accept ubiquitin from an E2 ubiquitin-conjugating enzyme in the form of a thioester and then directly transfers the ubiquitin to targeted substrates. It probably triggers the ubiquitin-mediated degradation of different substrates. This Arabidopsis thaliana (Mouse-ear cress) protein is E3 ubiquitin-protein ligase SINA-like 11.